The sequence spans 174 residues: Crossover junction endodeoxyribonuclease RuvC (174 aa).

Residues aspartate 16, glutamate 76, and aspartate 148 contribute to the active site. Mg(2+) is bound by residues aspartate 16, glutamate 76, and aspartate 148.

It belongs to the RuvC family. As to quaternary structure, homodimer which binds Holliday junction (HJ) DNA. The HJ becomes 2-fold symmetrical on binding to RuvC with unstacked arms; it has a different conformation from HJ DNA in complex with RuvA. In the full resolvosome a probable DNA-RuvA(4)-RuvB(12)-RuvC(2) complex forms which resolves the HJ. Mg(2+) is required as a cofactor.

It is found in the cytoplasm. The enzyme catalyses Endonucleolytic cleavage at a junction such as a reciprocal single-stranded crossover between two homologous DNA duplexes (Holliday junction).. The RuvA-RuvB-RuvC complex processes Holliday junction (HJ) DNA during genetic recombination and DNA repair. Endonuclease that resolves HJ intermediates. Cleaves cruciform DNA by making single-stranded nicks across the HJ at symmetrical positions within the homologous arms, yielding a 5'-phosphate and a 3'-hydroxyl group; requires a central core of homology in the junction. The consensus cleavage sequence is 5'-(A/T)TT(C/G)-3'. Cleavage occurs on the 3'-side of the TT dinucleotide at the point of strand exchange. HJ branch migration catalyzed by RuvA-RuvB allows RuvC to scan DNA until it finds its consensus sequence, where it cleaves and resolves the cruciform DNA. The protein is Crossover junction endodeoxyribonuclease RuvC of Rhodopseudomonas palustris (strain ATCC BAA-98 / CGA009).